We begin with the raw amino-acid sequence, 230 residues long: Cytidylate kinase (230 aa).

ATP is bound at residue 10–18; that stretch reads GPAGSGKST.

The protein belongs to the cytidylate kinase family. Type 1 subfamily.

It localises to the cytoplasm. The catalysed reaction is CMP + ATP = CDP + ADP. The enzyme catalyses dCMP + ATP = dCDP + ADP. In Leptospira borgpetersenii serovar Hardjo-bovis (strain JB197), this protein is Cytidylate kinase.